The following is a 957-amino-acid chain: MTQTLSQLENRGAFIERHIGPDAQQQQEMLKTVGADSLNALIGQIVPKDIQLATPPQVGEATTEFAALAELKAIAGLNKRFKSYIGMGYTPVQLPPVILRNMLENPGWYTAYTPYQPEVSQGRLEALLNFQQVTLDLTGLDIASASLLDEATAAAEAMAMAKRVSKLKNANRFFVAADVHPQTLDVVRTRAETFGFDVIVDDADKVLDHQDVFGVLLQQVGTTGEVHDYSALISELKSRKIIVSVAADFMALVLLTAPGKQGADIVFGSAQRFGVPMGYGGPHAAFFAGKDEFKRSMPGRIIGVSKDAAGNTALRMAMQTREQHIRREKANSNICTSQVLLANIASLYAVFHGPVGLKRIATRIHRFADILATGLQQKGLKLRHAHYFDTLCVEVADKAGVLARAEAAEINLRSDILNAVGITLDETTTREDVQNLFNVLLGDAHGLDVDALDKEVAHDSRSIQESMLRDDAILSHPVFNRHHSETEMMRYMHSLERKDLALNQAMIPLGSCTMKLNAAAEMIPITWPEFSELHPFCPADQAEGYHQMINQLSDWLVKLTGYDALCMQPNSGAQGEYAGLLAIRHYHESRNEGHRDICLIPSSAHGTNPASAQMAGMEVVVVACDKNGNIDLTDLRAKAEHAGEKLSCIMVTYPSTHGVYEETIREVCEIVHQFGGQVYLDGANMNAQVGITSPGFIGADVSHLNLHKTFCIPHGGGGPGMGPIGVKAHLAPFVPGHSVVQIEGMLTRQGAVSAAPFGSASILPISWMYIRMMGAEGLKQASQVAILNANYIATRLKDAYPVLYTGRDGRVAHECILDIRPLKDDTGISELDIAKRLIDYGFHAPTMSFPVAGTLMVEPTESESKVELDRFIEAMLAIRHEITRVKQGEWTLEDNPLVNAPHTQNELVAEWHHGYTREVAVFPAGMANKYWPTVKRLDDVYGDRNLFCSCVPMSEYQ.

Lys708 carries the N6-(pyridoxal phosphate)lysine modification.

The protein belongs to the GcvP family. In terms of assembly, the glycine cleavage system is composed of four proteins: P, T, L and H. Requires pyridoxal 5'-phosphate as cofactor.

The enzyme catalyses N(6)-[(R)-lipoyl]-L-lysyl-[glycine-cleavage complex H protein] + glycine + H(+) = N(6)-[(R)-S(8)-aminomethyldihydrolipoyl]-L-lysyl-[glycine-cleavage complex H protein] + CO2. In terms of biological role, the glycine cleavage system catalyzes the degradation of glycine. The P protein binds the alpha-amino group of glycine through its pyridoxal phosphate cofactor; CO(2) is released and the remaining methylamine moiety is then transferred to the lipoamide cofactor of the H protein. The sequence is that of Glycine dehydrogenase (decarboxylating) from Enterobacter sp. (strain 638).